The following is a 186-amino-acid chain: TATA-box-binding protein (186 aa).

2 repeat units span residues 10-86 and 101-179.

Belongs to the TBP family.

Its function is as follows. General factor that plays a role in the activation of archaeal genes transcribed by RNA polymerase. Binds specifically to the TATA box promoter element which lies close to the position of transcription initiation. This chain is TATA-box-binding protein, found in Haloarcula marismortui (strain ATCC 43049 / DSM 3752 / JCM 8966 / VKM B-1809) (Halobacterium marismortui).